Reading from the N-terminus, the 82-residue chain is UPF0298 protein SPCG_0698 (82 aa).

The protein belongs to the UPF0298 family.

Its subcellular location is the cytoplasm. The chain is UPF0298 protein SPCG_0698 from Streptococcus pneumoniae (strain CGSP14).